Reading from the N-terminus, the 258-residue chain is Flagellin B3 (258 aa).

Residues 1–8 constitute a propeptide that is removed on maturation; that stretch reads MRFLKKRG.

It belongs to the archaeal flagellin family.

It localises to the archaeal flagellum. Its function is as follows. Flagellin is the subunit protein which polymerizes to form the filaments of archaeal flagella. In Thermococcus kodakarensis (strain ATCC BAA-918 / JCM 12380 / KOD1) (Pyrococcus kodakaraensis (strain KOD1)), this protein is Flagellin B3 (flaB3).